We begin with the raw amino-acid sequence, 622 residues long: Auxin efflux carrier component 1 (622 aa).

The Extracellular segment spans residues 1 to 6; that stretch reads MITAAD. A helical transmembrane segment spans residues 7 to 27; that stretch reads FYHVMTAMVPLYVAMILAYGS. Residues 28–44 lie on the Cytoplasmic side of the membrane; the sequence is VKWWKIFTPDQCSGINR. A helical membrane pass occupies residues 45-65; it reads FVALFAVPLLSFHFIAANNPY. Val51 contributes to the (indol-3-yl)acetate binding site. The Extracellular segment spans residues 66 to 70; that stretch reads AMNLR. Residues 71 to 91 form a helical membrane-spanning segment; sequence FLAADSLQKVIVLSLLFLWCK. The Cytoplasmic segment spans residues 92-100; it reads LSRNGSLDW. The chain crosses the membrane as a helical span at residues 101–121; sequence TITLFSLSTLPNTLVMGIPLL. Residues Asn112 and Leu114 each coordinate (indol-3-yl)acetate. Residues 122-131 lie on the Extracellular side of the membrane; that stretch reads KGMYGNFSGD. Asn127 carries an N-linked (GlcNAc...) asparagine glycan. A helical membrane pass occupies residues 132–152; that stretch reads LMVQIVVLQCIIWYTLMLFLF. Tyr145 contacts (indol-3-yl)acetate. At 153–482 the chain is on the cytoplasmic side; sequence EYRGAKLLIS…LIRNPNSYSS (330 aa). Phosphoserine occurs at positions 209, 212, 221, and 225. Positions 213-233 are disordered; sequence RSDIYSRRSQGLSATPRPSNL. At Thr227 the chain carries Phosphothreonine. Position 231 is a phosphoserine (Ser231). Thr248 is subject to Phosphothreonine. A phosphoserine mark is found at Ser252, Ser253, and Ser271. The interval 268–362 is disordered; sequence GRNSNFGPGE…PVVGGKRQDG (95 aa). A Phosphothreonine modification is found at Thr286. Ser290 is modified (phosphoserine). The segment covering 298-311 has biased composition (low complexity); the sequence is PAKPTAAGTAAGAG. Thr302 carries the phosphothreonine modification. Ser317, Ser320, and Ser337 each carry phosphoserine. Phosphothreonine is present on Thr340. Phosphoserine occurs at positions 374, 377, 408, 414, 426, 434, and 446. Residues 483–503 traverse the membrane as a helical segment; sequence LFGITWSLISFKWNIEMPALI. Residues 504-506 are Extracellular-facing; that stretch reads AKS. Residues 507–527 traverse the membrane as a helical segment; sequence ISILSDAGLGMAMFSLGLFMA. Residues 528 to 541 lie on the Cytoplasmic side of the membrane; it reads LNPRIIACGNRRAA. A helical membrane pass occupies residues 542–562; that stretch reads FAAAMRFVVGPAVMLVASYAV. Topologically, residues 563 to 566 are extracellular; sequence GLRG. The chain crosses the membrane as a helical span at residues 567–587; the sequence is VLLHVAIIQAALPQGIVPFVF. Positions 582 and 583 each coordinate (indol-3-yl)acetate. Residues 588–601 are Cytoplasmic-facing; the sequence is AKEYNVHPDILSTA. A helical transmembrane segment spans residues 602–622; the sequence is VIFGMLIALPITLLYYILLGL.

Belongs to the auxin efflux carrier (TC 2.A.69.1) family. Homodimer. Interacts with TOPP4. Interacts with FYPP1 and FYPP3. Component of a complex made of PINs (e.g. PIN1 and PIN2), MAB4/MELs (e.g. NPY1/MAB4 and NPY5/MEL1) and AGC kinases (e.g. D6PK and PID) at the plasma membrane. Binds directly to NPY5/MEL1. In terms of tissue distribution, expressed at the basal side of elongated parenchymatous xylem cells.

It localises to the cell membrane. Auxin efflux carrier activity is competitively inhibited by naptalamate (N-1-naphthylphthalamic acid, NPA) but activated by D6PK-mediated phosphorylation. Its function is as follows. Acts as a component of the auxin efflux carrier; this activity is enhanced when activated by D6PK-mediated phosphorylation. Binds auxins including indole-3-acetic acid (IAA), indole-3-butyric acid (IBA), indole-3-propionic acid (IPA) and 4-chloroindole-3-acetic acid (4-Cl-IAA). Seems to be involved in the basipetal auxin transport. Mediates the formation of auxin gradient which is required to ensure correct organogenesis. Coordinated polar localization of PIN1 is directly regulated by the vesicle trafficking process and apical-basal PIN1 polarity also depends on the phosphorylation of conserved serine residues by PID kinase. The ARF-GEF protein GNOM is required for the correct recycling of PIN1 between the plasma membrane and endosomal compartments. Recrutes NPY proteins (e.g. NPY1/MAB4 and NPY5/MEL1) to the plasma membrane in a polar basal localization in root epidermis; this activity is optimized by AGC kinases-mediated (e.g. D6PK and PID) phosphorylation that limits their lateral diffusion-based escape. In Arabidopsis thaliana (Mouse-ear cress), this protein is Auxin efflux carrier component 1.